Reading from the N-terminus, the 106-residue chain is Large ribosomal subunit protein bL21 (106 aa).

The protein belongs to the bacterial ribosomal protein bL21 family. As to quaternary structure, part of the 50S ribosomal subunit. Contacts protein L20.

Its function is as follows. This protein binds to 23S rRNA in the presence of protein L20. The chain is Large ribosomal subunit protein bL21 from Streptomyces griseus subsp. griseus (strain JCM 4626 / CBS 651.72 / NBRC 13350 / KCC S-0626 / ISP 5235).